Consider the following 298-residue polypeptide: Nucleotide-binding protein RSKD131_3085 (298 aa).

Position 11–18 (11–18) interacts with ATP; sequence GPSGAGRT. 58 to 61 lines the GTP pocket; that stretch reads DVRN.

It belongs to the RapZ-like family.

In terms of biological role, displays ATPase and GTPase activities. The protein is Nucleotide-binding protein RSKD131_3085 of Cereibacter sphaeroides (strain KD131 / KCTC 12085) (Rhodobacter sphaeroides).